A 339-amino-acid polypeptide reads, in one-letter code: Glycerol-3-phosphate dehydrogenase [NAD(P)+] (339 aa).

Ser15, Tyr16, His36, and Lys110 together coordinate NADPH. Residues Lys110, Gly139, and Thr141 each contribute to the sn-glycerol 3-phosphate site. Ala143 is an NADPH binding site. Sn-glycerol 3-phosphate is bound by residues Lys195, Asp248, Ser258, Arg259, and Asn260. Lys195 serves as the catalytic Proton acceptor. Residue Arg259 participates in NADPH binding. Residues Val283 and Glu285 each contribute to the NADPH site.

This sequence belongs to the NAD-dependent glycerol-3-phosphate dehydrogenase family.

The protein localises to the cytoplasm. The enzyme catalyses sn-glycerol 3-phosphate + NAD(+) = dihydroxyacetone phosphate + NADH + H(+). It catalyses the reaction sn-glycerol 3-phosphate + NADP(+) = dihydroxyacetone phosphate + NADPH + H(+). The protein operates within membrane lipid metabolism; glycerophospholipid metabolism. In terms of biological role, catalyzes the reduction of the glycolytic intermediate dihydroxyacetone phosphate (DHAP) to sn-glycerol 3-phosphate (G3P), the key precursor for phospholipid synthesis. The polypeptide is Glycerol-3-phosphate dehydrogenase [NAD(P)+] (Klebsiella pneumoniae subsp. pneumoniae (strain ATCC 700721 / MGH 78578)).